A 22-amino-acid chain; its full sequence is Superoxide dismutase [Cu-Zn] 2 (22 aa).

It belongs to the Cu-Zn superoxide dismutase family. In terms of assembly, homodimer. The cofactor is Cu cation. It depends on Zn(2+) as a cofactor. Dominant isozyme in roots.

Its subcellular location is the cytoplasm. It catalyses the reaction 2 superoxide + 2 H(+) = H2O2 + O2. Its function is as follows. Destroys radicals which are normally produced within the cells and which are toxic to biological systems. This chain is Superoxide dismutase [Cu-Zn] 2, found in Picea abies (Norway spruce).